A 177-amino-acid polypeptide reads, in one-letter code: Large ribosomal subunit protein uL6 (177 aa).

This sequence belongs to the universal ribosomal protein uL6 family. In terms of assembly, part of the 50S ribosomal subunit.

In terms of biological role, this protein binds to the 23S rRNA, and is important in its secondary structure. It is located near the subunit interface in the base of the L7/L12 stalk, and near the tRNA binding site of the peptidyltransferase center. In Rickettsia africae (strain ESF-5), this protein is Large ribosomal subunit protein uL6.